The chain runs to 188 residues: dCTP deaminase (188 aa).

DCTP is bound by residues 111–116 (KSTYAR), 135–137 (TLE), glutamine 156, tyrosine 170, and glutamine 180. Glutamate 137 (proton donor/acceptor) is an active-site residue.

Belongs to the dCTP deaminase family. In terms of assembly, homotrimer.

The catalysed reaction is dCTP + H2O + H(+) = dUTP + NH4(+). It participates in pyrimidine metabolism; dUMP biosynthesis; dUMP from dCTP (dUTP route): step 1/2. Functionally, catalyzes the deamination of dCTP to dUTP. The polypeptide is dCTP deaminase (Nitrosococcus oceani (strain ATCC 19707 / BCRC 17464 / JCM 30415 / NCIMB 11848 / C-107)).